A 436-amino-acid polypeptide reads, in one-letter code: Adenosylhomocysteinase (436 aa).

Substrate is bound by residues Thr-62, Asp-136, and Glu-161. 162 to 164 (TTT) contributes to the NAD(+) binding site. Substrate is bound by residues Lys-191 and Asp-195. NAD(+) contacts are provided by residues Asn-196, 225-230 (GFGDVG), Glu-248, Asn-283, 304-306 (IGH), and Asn-352.

Belongs to the adenosylhomocysteinase family. It depends on NAD(+) as a cofactor.

It localises to the cytoplasm. The enzyme catalyses S-adenosyl-L-homocysteine + H2O = L-homocysteine + adenosine. It functions in the pathway amino-acid biosynthesis; L-homocysteine biosynthesis; L-homocysteine from S-adenosyl-L-homocysteine: step 1/1. May play a key role in the regulation of the intracellular concentration of adenosylhomocysteine. This is Adenosylhomocysteinase from Leptospira interrogans serogroup Icterohaemorrhagiae serovar copenhageni (strain Fiocruz L1-130).